Here is a 398-residue protein sequence, read N- to C-terminus: Na(+)/H(+) antiporter NhaA (398 aa).

12 helical membrane passes run 21-41 (AGGIILMVAAALALIVANSPL), 56-76 (LSVSHWVNDGLMAVFFLLVGL), 94-114 (VLPGIAAAGGMLVPALVYVFI), 124-144 (GWAIPTATDIAFALGVLSLLG), 153-173 (VFLTALAIIDDLGAVIIIAIF), 176-196 (SGLSLAYLGAAFAVIAALVVL), 201-221 (VMTLLPYLVLGAILWVLVLKS), 263-283 (IVPFFVIPIFGFANAGVSLAG), 284-304 (LSLGALIEPLTLGVAAGLVVG), 306-326 (LVGVFGSSALAIRLGLADLPA), 333-353 (MIGISLLCGIGFTMSLFIGLL), and 367-387 (VGILAGSFVAAILGAAVLLMA).

Belongs to the NhaA Na(+)/H(+) (TC 2.A.33) antiporter family.

It localises to the cell inner membrane. It carries out the reaction Na(+)(in) + 2 H(+)(out) = Na(+)(out) + 2 H(+)(in). Na(+)/H(+) antiporter that extrudes sodium in exchange for external protons. The protein is Na(+)/H(+) antiporter NhaA of Mesorhizobium japonicum (strain LMG 29417 / CECT 9101 / MAFF 303099) (Mesorhizobium loti (strain MAFF 303099)).